We begin with the raw amino-acid sequence, 191 residues long: GTP cyclohydrolase 1 (191 aa).

Zn(2+) contacts are provided by C80, H83, and C151.

This sequence belongs to the GTP cyclohydrolase I family. As to quaternary structure, toroid-shaped homodecamer, composed of two pentamers of five dimers.

It carries out the reaction GTP + H2O = 7,8-dihydroneopterin 3'-triphosphate + formate + H(+). The protein operates within cofactor biosynthesis; 7,8-dihydroneopterin triphosphate biosynthesis; 7,8-dihydroneopterin triphosphate from GTP: step 1/1. The polypeptide is GTP cyclohydrolase 1 (Nitrosospira multiformis (strain ATCC 25196 / NCIMB 11849 / C 71)).